The following is a 224-amino-acid chain: uncharacterized protein (224 aa).

This is an uncharacterized protein from Mycobacterium tuberculosis (strain ATCC 25618 / H37Rv).